We begin with the raw amino-acid sequence, 178 residues long: Interleukin-10 (178 aa).

Residues 1-18 form the signal peptide; sequence MPGSALLCCLALLAGVKA. 2 cysteine pairs are disulfide-bonded: Cys-30–Cys-126 and Cys-80–Cys-132. The N-linked (GlcNAc...) asparagine glycan is linked to Asn-67. N-linked (GlcNAc...) asparagine glycosylation is present at Asn-134.

It belongs to the IL-10 family. Homodimer. Interacts with IL10RA and IL10RB.

The protein resides in the secreted. Its function is as follows. Major immune regulatory cytokine that acts on many cells of the immune system where it has profound anti-inflammatory functions, limiting excessive tissue disruption caused by inflammation. Mechanistically, IL10 binds to its heterotetrameric receptor comprising IL10RA and IL10RB leading to JAK1 and STAT2-mediated phosphorylation of STAT3. In turn, STAT3 translocates to the nucleus where it drives expression of anti-inflammatory mediators. Targets antigen-presenting cells (APCs) such as macrophages and monocytes and inhibits their release of pro-inflammatory cytokines including granulocyte-macrophage colony-stimulating factor /GM-CSF, granulocyte colony-stimulating factor/G-CSF, IL-1 alpha, IL-1 beta, IL-6, IL-8 and TNF-alpha. Also interferes with antigen presentation by reducing the expression of MHC-class II and co-stimulatory molecules, thereby inhibiting their ability to induce T cell activation. In addition, controls the inflammatory response of macrophages by reprogramming essential metabolic pathways including mTOR signaling. The protein is Interleukin-10 (IL10) of Cavia porcellus (Guinea pig).